The following is a 508-amino-acid chain: DNA-directed RNA polymerase subunit Rpo1C (508 aa).

The segment at 1–123 is unknown; that stretch reads MIIWKDTAKN…REKYEYEKKV (123 aa). Residues 124–508 are DNA-directed RNA polymerase subunit Rpo1C; the sequence is SSQVLDVIAE…IYKGYPKTKK (385 aa).

This sequence belongs to the RNA polymerase beta' chain family. In terms of assembly, part of the RNA polymerase complex.

It localises to the cytoplasm. It catalyses the reaction RNA(n) + a ribonucleoside 5'-triphosphate = RNA(n+1) + diphosphate. Its function is as follows. DNA-dependent RNA polymerase (RNAP) catalyzes the transcription of DNA into RNA using the four ribonucleoside triphosphates as substrates. Forms part of the jaw domain. This is DNA-directed RNA polymerase subunit Rpo1C from Thermoplasma volcanium (strain ATCC 51530 / DSM 4299 / JCM 9571 / NBRC 15438 / GSS1).